The following is a 364-amino-acid chain: UDP-N-acetylglucosamine--N-acetylmuramyl-(pentapeptide) pyrophosphoryl-undecaprenol N-acetylglucosamine transferase (364 aa).

UDP-N-acetyl-alpha-D-glucosamine is bound by residues Thr10–Gly12, Asn124, Arg165, Ser193, Ile248, and Gln293.

The protein belongs to the glycosyltransferase 28 family. MurG subfamily.

It is found in the cell inner membrane. It catalyses the reaction di-trans,octa-cis-undecaprenyl diphospho-N-acetyl-alpha-D-muramoyl-L-alanyl-D-glutamyl-meso-2,6-diaminopimeloyl-D-alanyl-D-alanine + UDP-N-acetyl-alpha-D-glucosamine = di-trans,octa-cis-undecaprenyl diphospho-[N-acetyl-alpha-D-glucosaminyl-(1-&gt;4)]-N-acetyl-alpha-D-muramoyl-L-alanyl-D-glutamyl-meso-2,6-diaminopimeloyl-D-alanyl-D-alanine + UDP + H(+). Its pathway is cell wall biogenesis; peptidoglycan biosynthesis. Functionally, cell wall formation. Catalyzes the transfer of a GlcNAc subunit on undecaprenyl-pyrophosphoryl-MurNAc-pentapeptide (lipid intermediate I) to form undecaprenyl-pyrophosphoryl-MurNAc-(pentapeptide)GlcNAc (lipid intermediate II). The protein is UDP-N-acetylglucosamine--N-acetylmuramyl-(pentapeptide) pyrophosphoryl-undecaprenol N-acetylglucosamine transferase of Geobacter sulfurreducens (strain ATCC 51573 / DSM 12127 / PCA).